The chain runs to 344 residues: Putative transport protein sll0060 (344 aa).

The next 8 membrane-spanning stretches (helical) occupy residues 14-34 (LWIG…LQIL), 41-61 (LRIF…VRWL), 72-92 (AVAL…LLVI), 155-175 (LINL…IFIM), 215-235 (IGQA…LSIF), 237-257 (VPLA…PFGG), 262-282 (VLIS…VLAI), and 310-330 (ILLS…LVAI).

This sequence belongs to the autoinducer-2 exporter (AI-2E) (TC 2.A.86) family.

It localises to the cell membrane. The chain is Putative transport protein sll0060 from Synechocystis sp. (strain ATCC 27184 / PCC 6803 / Kazusa).